Reading from the N-terminus, the 738-residue chain is 1,4-alpha-glucan branching enzyme GlgB (738 aa).

Asp399 functions as the Nucleophile in the catalytic mechanism. Glu452 acts as the Proton donor in catalysis.

It belongs to the glycosyl hydrolase 13 family. GlgB subfamily. Monomer.

The enzyme catalyses Transfers a segment of a (1-&gt;4)-alpha-D-glucan chain to a primary hydroxy group in a similar glucan chain.. It participates in glycan biosynthesis; glycogen biosynthesis. In terms of biological role, catalyzes the formation of the alpha-1,6-glucosidic linkages in glycogen by scission of a 1,4-alpha-linked oligosaccharide from growing alpha-1,4-glucan chains and the subsequent attachment of the oligosaccharide to the alpha-1,6 position. The sequence is that of 1,4-alpha-glucan branching enzyme GlgB from Chlamydia trachomatis serovar A (strain ATCC VR-571B / DSM 19440 / HAR-13).